The following is a 190-amino-acid chain: MSRKNKALLEIAKDIGGDEAVEIVKALEKKGEATDEELAEITGIRVNTVRKILYALYDEKLADFKRIKDEETGWYYYYWHLETKRLPEIIRARKLRELERLKKMLQEETSEVYYHCGNPEHPKLTFDEAFEYGFTCPICGEILQEYDNSAVIEELKKRIEELEIELGLRPSPKKEKKKTRAKAKRKTRKK.

The 84-residue stretch at 4-87 folds into the HTH TFE/IIEalpha-type domain; the sequence is KNKALLEIAK…YWHLETKRLP (84 aa). Positions 170–190 are disordered; it reads PSPKKEKKKTRAKAKRKTRKK. Over residues 174–190 the composition is skewed to basic residues; it reads KEKKKTRAKAKRKTRKK.

This sequence belongs to the TFE family. Monomer. Interaction with RNA polymerase subunits RpoF and RpoE is necessary for Tfe stimulatory transcription activity. Able to interact with Tbp and RNA polymerase in the absence of DNA promoter. Interacts both with the preinitiation and elongation complexes.

Functionally, transcription factor that plays a role in the activation of archaeal genes transcribed by RNA polymerase. Facilitates transcription initiation by enhancing TATA-box recognition by TATA-box-binding protein (Tbp), and transcription factor B (Tfb) and RNA polymerase recruitment. Not absolutely required for transcription in vitro, but particularly important in cases where Tbp or Tfb function is not optimal. It dynamically alters the nucleic acid-binding properties of RNA polymerases by stabilizing the initiation complex and destabilizing elongation complexes. Seems to translocate with the RNA polymerase following initiation and acts by binding to the non template strand of the transcription bubble in elongation complexes. This chain is Transcription factor E, found in Pyrococcus abyssi (strain GE5 / Orsay).